We begin with the raw amino-acid sequence, 119 residues long: Large ribosomal subunit protein bL20 (119 aa).

This sequence belongs to the bacterial ribosomal protein bL20 family.

In terms of biological role, binds directly to 23S ribosomal RNA and is necessary for the in vitro assembly process of the 50S ribosomal subunit. It is not involved in the protein synthesizing functions of that subunit. This chain is Large ribosomal subunit protein bL20, found in Bacillus licheniformis (strain ATCC 14580 / DSM 13 / JCM 2505 / CCUG 7422 / NBRC 12200 / NCIMB 9375 / NCTC 10341 / NRRL NRS-1264 / Gibson 46).